We begin with the raw amino-acid sequence, 240 residues long: Uridylate kinase (240 aa).

12–15 (KLSG) contributes to the ATP binding site. G54 is a UMP binding site. ATP is bound by residues G55 and R59. UMP-binding positions include D74 and 135–142 (TGNPFFTT). T162, Y168, and D171 together coordinate ATP.

It belongs to the UMP kinase family. In terms of assembly, homohexamer.

The protein resides in the cytoplasm. The enzyme catalyses UMP + ATP = UDP + ADP. It participates in pyrimidine metabolism; CTP biosynthesis via de novo pathway; UDP from UMP (UMPK route): step 1/1. Inhibited by UTP. Functionally, catalyzes the reversible phosphorylation of UMP to UDP. The sequence is that of Uridylate kinase from Xanthomonas oryzae pv. oryzae (strain KACC10331 / KXO85).